The following is an 82-amino-acid chain: Small ribosomal subunit protein uS17 (82 aa).

This sequence belongs to the universal ribosomal protein uS17 family. In terms of assembly, part of the 30S ribosomal subunit.

One of the primary rRNA binding proteins, it binds specifically to the 5'-end of 16S ribosomal RNA. In Nitrobacter winogradskyi (strain ATCC 25391 / DSM 10237 / CIP 104748 / NCIMB 11846 / Nb-255), this protein is Small ribosomal subunit protein uS17.